Reading from the N-terminus, the 91-residue chain is Long neurotoxin OH-56 (91 aa).

An N-terminal signal peptide occupies residues 1 to 21; sequence MKTLLLTLVVVTIMCLDLGYT. Cystine bridges form between Cys24/Cys42, Cys35/Cys63, Cys48/Cys52, Cys67/Cys78, and Cys79/Cys84.

This sequence belongs to the three-finger toxin family. Long-chain subfamily. Type II alpha-neurotoxin sub-subfamily. In terms of tissue distribution, expressed by the venom gland.

The protein resides in the secreted. Its function is as follows. Binds with high affinity to muscular (alpha-1/CHRNA1) and neuronal (alpha-7/CHRNA7) nicotinic acetylcholine receptor (nAChR) and inhibits acetylcholine from binding to the receptor, thereby impairing neuromuscular and neuronal transmission. The chain is Long neurotoxin OH-56 from Ophiophagus hannah (King cobra).